A 434-amino-acid polypeptide reads, in one-letter code: Autophagy-related protein 18 (434 aa).

3 WD repeats span residues 1–34, 183–223, and 228–267; these read MNYVTFNQDYSCLAVGTAKGFRIYHTEPFSKIFT, AHRA…KLYQ, and TYPSSIFSLSFNMSSTLLCVSSNSDTIHIFRLGGPVTGLP. The L/FRRG motif motif lies at 224–228; sequence FRRGT. Positions 262–318 are disordered; it reads PVTGLPESPQSPGDKDKWRRSRSFDSENGSPPAGISPGSEMADVPAEKSKSSGTFGS. Over residues 274–286 the composition is skewed to basic and acidic residues; it reads GDKDKWRRSRSFD. The WD 4 repeat unit spans residues 367 to 407; the sequence is PRSGPVKSVVAMSSSSPQVMVVTSDGGFYIYSIDMETGGEG.

The protein belongs to the WD repeat PROPPIN family. Component of the PI(3,5)P2 regulatory complex.

Its subcellular location is the preautophagosomal structure membrane. It is found in the vacuole membrane. The protein resides in the endosome membrane. In terms of biological role, the PI(3,5)P2 regulatory complex regulates both the synthesis and turnover of phosphatidylinositol 3,5-bisphosphate (PtdIns(3,5)P2). Necessary for proper vacuole morphology. Plays an important role in osmotically-induced vacuole fragmentation. Required for cytoplasm to vacuole transport (Cvt) vesicle formation, pexophagy and starvation-induced autophagy. Involved in correct atg9 trafficking to the pre-autophagosomal structure. Might also be involved in premeiotic DNA replication. The chain is Autophagy-related protein 18 (atg18) from Botryotinia fuckeliana (strain B05.10) (Noble rot fungus).